A 162-amino-acid polypeptide reads, in one-letter code: Ribosome maturation factor RimP (162 aa).

The protein belongs to the RimP family.

It is found in the cytoplasm. Required for maturation of 30S ribosomal subunits. This is Ribosome maturation factor RimP from Leptospira biflexa serovar Patoc (strain Patoc 1 / Ames).